Reading from the N-terminus, the 227-residue chain is Uracil phosphoribosyltransferase (227 aa).

36–40 contacts GTP; sequence KGLVK. 5-phospho-alpha-D-ribose 1-diphosphate contacts are provided by residues Arg86, Arg111, and 145–153; that span reads DPMLATGST. Residues Ile212 and 217 to 219 contribute to the uracil site; that span reads GDA. Asp218 provides a ligand contact to 5-phospho-alpha-D-ribose 1-diphosphate.

Belongs to the UPRTase family. Mg(2+) serves as cofactor.

It catalyses the reaction UMP + diphosphate = 5-phospho-alpha-D-ribose 1-diphosphate + uracil. It participates in pyrimidine metabolism; UMP biosynthesis via salvage pathway; UMP from uracil: step 1/1. Its activity is regulated as follows. Allosterically activated by GTP. Catalyzes the conversion of uracil and 5-phospho-alpha-D-ribose 1-diphosphate (PRPP) to UMP and diphosphate. The chain is Uracil phosphoribosyltransferase from Halobacterium salinarum (strain ATCC 700922 / JCM 11081 / NRC-1) (Halobacterium halobium).